The primary structure comprises 645 residues: 1,4-alpha-glucan branching enzyme GlgB (645 aa).

Residue D309 is the Nucleophile of the active site. E352 serves as the catalytic Proton donor. Residues 619-645 (VKTRKGSKKQDGSKTKVRSNVTSRGKR) are disordered. The segment covering 636 to 645 (RSNVTSRGKR) has biased composition (polar residues).

It belongs to the glycosyl hydrolase 13 family. GlgB subfamily. Monomer.

The enzyme catalyses Transfers a segment of a (1-&gt;4)-alpha-D-glucan chain to a primary hydroxy group in a similar glucan chain.. It participates in glycan biosynthesis; glycogen biosynthesis. Catalyzes the formation of the alpha-1,6-glucosidic linkages in glycogen by scission of a 1,4-alpha-linked oligosaccharide from growing alpha-1,4-glucan chains and the subsequent attachment of the oligosaccharide to the alpha-1,6 position. This is 1,4-alpha-glucan branching enzyme GlgB from Bacillus cereus (strain Q1).